Consider the following 124-residue polypeptide: MTGRRTRLGDWGETMAARFLARRGYEVLARKWRCAAGEIDIVARHDGDLVFVEVRTRRGRDPGMAAESITNAKRARLMALADAFLAAHDLPSNTPWRIDVVAISVGLRAQEVSIEHIPYAVEEA.

It belongs to the UPF0102 family.

This is UPF0102 protein Rcas_2007 from Roseiflexus castenholzii (strain DSM 13941 / HLO8).